The following is a 133-amino-acid chain: Small ribosomal subunit protein uS19 (133 aa).

It belongs to the universal ribosomal protein uS19 family.

Protein S19 forms a complex with S13 that binds strongly to the 16S ribosomal RNA. The polypeptide is Small ribosomal subunit protein uS19 (Thermococcus onnurineus (strain NA1)).